Reading from the N-terminus, the 1014-residue chain is MPARAPPRRLPRLLLLRLLSLHLLLLTLRARCLSAEPGQGAQTWARFARPPVPEASGLLHDTFPDGFLWAVGSAAYQTEGGWRQHGKGASIWDTFTHHPRAIPEDSPIVMAPSGAPLPPLPSTGDVASDSYNNVYRDTEGLRELGVTHYRFSISWARVLPNGTAGTPNREGLRYYRRLLERLRELGVQPVVTLYHWDLPQRLQDTYGGWANRALADHFRDYAELCFRHFGGQVKYWITIDNPYVVAWHGYATGRLAPGVRGSSRLGYLVAHNLLLAHAKVWRLYNTSFRPTQGGRVSIALGSHWITPRRMTDYHIRECQKSLDFVLGWFAKPIFIDGDYPKSMKNNLSSLLPDFTESEKRFIRGTADFFALSFGPTLSFQLLDPSMKFRQLESPSLRQLLSWIDLEYNHPQIFIVENGWFVSGTTRRDDAKYMYYLKKFIMESLKAIRLDGVDVIGYTAWSLMDGFEWHRGYSIRRGLFYVDFLSQDKELLPKSSALFYQKLIENNGFPPLPENQPLEGTFPCDFAWGVVDNYIQVDPTLSQFTDPNVYLWDVHHSKRLIKVDGVVAKKRKPYCVDFSAIRPQITLLREMRVTHFRFSLDWALILPLGNQTQVNRTVLHFYRCMVSELVHANITPVVALWQPATPHQGLPHALAKHGAWENPHTALAFADYANLCFEELGHWVKFWITINEPNSRNMTYRAGHHLLKAHALAWHLYDDKFRAAQKGKISIALQVDWIEPACPFSQKDKEVAERVLEFDVGWLAEPIFGSGDYPHVMREWLNQKNNFLLPYFTEDEKKLIRGSFDFLALSHYTTILVDWEKEDPIKYNDYLEVQEMTDITWLNSPNQVAVVPWGLRKALNWLRFKYGDLPMFVTANGIDDDPHAEQDSLRMYYIKNYVNEALKAYVLDGINLCGYFAYSLSDRSVPKSGFYRYAANQFEPKPSIKHYRKIIDNNGFLGSGTLGRFCPEEYTVCTGCGFFQTRKSLLAFISFLVFAFVTSLALIYYYSKKGRRRYK.

An N-terminal signal peptide occupies residues 1 to 34 (MPARAPPRRLPRLLLLRLLSLHLLLLTLRARCLS). At 35–983 (AEPGQGAQTW…GCGFFQTRKS (949 aa)) the chain is on the extracellular side. Glycosyl hydrolase-1 regions lie at residues 59–508 (LHDT…NNGF) and 517–955 (LEGT…NNGF). 6 N-linked (GlcNAc...) asparagine glycosylation sites follow: Asn161, Asn285, Asn346, Asn609, Asn614, and Asn696. A helical membrane pass occupies residues 984 to 1004 (LLAFISFLVFAFVTSLALIYY). Residues 1005–1014 (YSKKGRRRYK) are Cytoplasmic-facing.

The protein belongs to the glycosyl hydrolase 1 family. Klotho subfamily. As to quaternary structure, homodimer. Interacts with FGF23 and FGFR1. In terms of processing, N-glycosylated. Present in cortical renal tubules and the parathyroid (at protein level). Strongly expressed in kidney. Expressed at low levels in brain, lung, intestine and ovaries.

It is found in the cell membrane. It localises to the apical cell membrane. Its subcellular location is the secreted. It carries out the reaction a beta-D-glucuronoside + H2O = D-glucuronate + an alcohol. In terms of biological role, may have weak glycosidase activity towards glucuronylated steroids. However, it lacks essential active site Glu residues at positions 241 and 874, suggesting it may be inactive as a glycosidase in vivo. May be involved in the regulation of calcium and phosphorus homeostasis by inhibiting the synthesis of active vitamin D. Essential factor for the specific interaction between FGF23 and FGFR1. The Klotho peptide generated by cleavage of the membrane-bound isoform may be an anti-aging circulating hormone which would extend life span by inhibiting insulin/IGF1 signaling. The chain is Klotho (Kl) from Rattus norvegicus (Rat).